Consider the following 507-residue polypeptide: MVTLNASSPLTTKSFLPYRHAPRRPISFSPVFAVHSTDPKKSTQSASASVKWSLESWKSKKALQLPDYPDQKDVDSVLQTLSSFPPIVFAGEARKLEDKLGQAAMGQAFMLQGGDCAESFKEFNANNIRDTFRVLLQMGVVLMFGGQLPVIKVGRMAGQFAKPRSDPFEEKDGVKLPSYRGDNINGDAFDEKSRIPDPHRMVRAYTQSVATLNLLRAFATGGYAAMQRVSQWNLDFTQHSEQGDRYRELANRVDEALGFMGAAGLTSAHPIMTTTEFWTSHECLLLPYEQALTREDSTSGLYYDCSAHMLWVGERTRQLDGAHVEFLRGIANPLGIKVSDKMVPSELVKLIEILNPQNKPGRITVIVRMGAENMRVKLPNLIRAVRGAGQIVTWVSDPMHGNTIMAPGGLKTRSFDAIRAELRAFFDVHDQEGSFPGGVHLEMTGQNVTECVGGSRTITYNDLSSRYHTHCDPRLNASQSLELAFIIAERLRKRRLGSGNLPSSIGV.

Belongs to the class-II DAHP synthase family.

It is found in the plastid. The protein resides in the chloroplast. It carries out the reaction D-erythrose 4-phosphate + phosphoenolpyruvate + H2O = 7-phospho-2-dehydro-3-deoxy-D-arabino-heptonate + phosphate. It participates in metabolic intermediate biosynthesis; chorismate biosynthesis; chorismate from D-erythrose 4-phosphate and phosphoenolpyruvate: step 1/7. The sequence is that of Phospho-2-dehydro-3-deoxyheptonate aldolase 2, chloroplastic (DHS2) from Arabidopsis thaliana (Mouse-ear cress).